We begin with the raw amino-acid sequence, 97 residues long: Protein transport protein SFT1 (97 aa).

The Cytoplasmic portion of the chain corresponds to 1 to 74; the sequence is MSNSRYSQTE…RLTRSLKAGN (74 aa). The t-SNARE coiled-coil homology domain occupies 7 to 69; the sequence is SQTESNNDRK…KNSSSRLTRS (63 aa). A helical; Anchor for type IV membrane protein transmembrane segment spans residues 75–94; the sequence is SIWRMVGLALLIFFILYTLF. The Lumenal portion of the chain corresponds to 95 to 97; sequence KLF.

Component of a SNARE complex consisting of SED5, GOS1, YKT6 and SFT1.

It localises to the golgi apparatus membrane. In terms of biological role, vesicle SNARE required for retrograde transport within the Golgi complex. The chain is Protein transport protein SFT1 (SFT1) from Saccharomyces cerevisiae (strain ATCC 204508 / S288c) (Baker's yeast).